The following is a 368-amino-acid chain: Agmatine deiminase (368 aa).

Cysteine 357 acts as the Amidino-cysteine intermediate in catalysis.

The protein belongs to the agmatine deiminase family. Homodimer.

It catalyses the reaction agmatine + H2O = N-carbamoylputrescine + NH4(+). Its pathway is amine and polyamine biosynthesis; putrescine biosynthesis via agmatine pathway; N-carbamoylputrescine from agmatine: step 1/1. Its function is as follows. Mediates the hydrolysis of agmatine into N-carbamoylputrescine in the arginine decarboxylase (ADC) pathway of putrescine biosynthesis, a basic polyamine. The sequence is that of Agmatine deiminase from Pseudomonas aeruginosa (strain UCBPP-PA14).